Here is a 317-residue protein sequence, read N- to C-terminus: MLMVPNIAILSGGFSCEREISLMSGKAVKKALDSLSYNAIEIDVDSNIAQKLKKTNPALAFIALHGPYGEDGCIQGLLEILGIKYTHSEVMASAVAMNKVMSKHIFHSLNIDTPRGYVISREDVLKNNIKVDYPYVLKPINEGSSIGVHMIFSHEDYLELKNNSSTIMEKMIIEEYIPGIELHTAVLLNEAIGTMEIRPKNKFYDYEAKYTDGFAEHIFPAEIPNNIYRITLEHALKVHQFLGCKTVSRSDFRYNPQNNTLKMLEVNTHPGFTELSLVPEIAKLTRGIDFNELVKIIVEDSLHHRNIRDQADVEQCY.

One can recognise an ATP-grasp domain in the interval 103–299 (KHIFHSLNID…FNELVKIIVE (197 aa)). Position 130-183 (130-183 (KVDYPYVLKPINEGSSIGVHMIFSHEDYLELKNNSSTIMEKMIIEEYIPGIELH)) interacts with ATP. 3 residues coordinate Mg(2+): D251, E265, and N267.

It belongs to the D-alanine--D-alanine ligase family. The cofactor is Mg(2+). It depends on Mn(2+) as a cofactor.

It localises to the cytoplasm. The catalysed reaction is 2 D-alanine + ATP = D-alanyl-D-alanine + ADP + phosphate + H(+). It functions in the pathway cell wall biogenesis; peptidoglycan biosynthesis. Functionally, cell wall formation. This Wolbachia pipientis subsp. Culex pipiens (strain wPip) protein is D-alanine--D-alanine ligase.